The sequence spans 271 residues: Acetyl-coenzyme A carboxylase carboxyl transferase subunit beta (271 aa).

In terms of domain architecture, CoA carboxyltransferase N-terminal spans 21-271 (LWIQCPYCKQ…LGDLLALHTA (251 aa)). The Zn(2+) site is built by C25, C28, C43, and C46. Residues 25–46 (CPYCKQGSYRESLGNAQVCPHC) form a C4-type zinc finger.

This sequence belongs to the AccD/PCCB family. In terms of assembly, acetyl-CoA carboxylase is a heterohexamer composed of biotin carboxyl carrier protein (AccB), biotin carboxylase (AccC) and two subunits each of ACCase subunit alpha (AccA) and ACCase subunit beta (AccD). It depends on Zn(2+) as a cofactor.

Its subcellular location is the cytoplasm. It carries out the reaction N(6)-carboxybiotinyl-L-lysyl-[protein] + acetyl-CoA = N(6)-biotinyl-L-lysyl-[protein] + malonyl-CoA. It functions in the pathway lipid metabolism; malonyl-CoA biosynthesis; malonyl-CoA from acetyl-CoA: step 1/1. In terms of biological role, component of the acetyl coenzyme A carboxylase (ACC) complex. Biotin carboxylase (BC) catalyzes the carboxylation of biotin on its carrier protein (BCCP) and then the CO(2) group is transferred by the transcarboxylase to acetyl-CoA to form malonyl-CoA. This is Acetyl-coenzyme A carboxylase carboxyl transferase subunit beta from Lacticaseibacillus casei (strain BL23) (Lactobacillus casei).